Consider the following 125-residue polypeptide: Classical arabinogalactan protein 27 (125 aa).

The N-terminal stretch at 1-21 is a signal peptide; sequence MASSILLTLITFIFLSSLSLS. The span at 20–36 shows a compositional bias: low complexity; it reads LSSPTTNTIPSSQTISP. Residues 20–95 form a disordered region; it reads LSSPTTNTIP…ASPPASSLAS (76 aa). Polar residues predominate over residues 53–66; sequence AVSSTQTIPSSSTL. Over residues 77 to 95 the composition is skewed to low complexity; it reads DPDPAFAPSASPPASSLAS. Ser98 is lipidated: GPI-anchor amidated serine. The propeptide at 99-125 is removed in mature form; the sequence is QAPGVFIYFVFAAVYCFSLRLLAVSAI.

The protein belongs to the classical AGP family. Post-translationally, O-glycosylated on the hydroxyproline residues.

The protein localises to the cell membrane. Proteoglycan that seems to be implicated in diverse developmental roles such as differentiation, cell-cell recognition, embryogenesis and programmed cell death. This is Classical arabinogalactan protein 27 (AGP27) from Arabidopsis thaliana (Mouse-ear cress).